The chain runs to 63 residues: Cytochrome c oxidase subunit 7C, mitochondrial (63 aa).

Residues 1–16 (MLGQSIRRFTTSVVRR) constitute a mitochondrion transit peptide. Residues 17–33 (SHYEEGPGKNLPFSVEN) are Mitochondrial matrix-facing. Lysine 25 is modified (N6-acetyllysine; alternate). Lysine 25 carries the N6-succinyllysine; alternate modification. A helical membrane pass occupies residues 34–60 (KWRLLAMMTLYFGSGFAAPFFIVRHQL). The Mitochondrial intermembrane portion of the chain corresponds to 61–63 (LKK).

The protein belongs to the cytochrome c oxidase VIIc family. In terms of assembly, component of the cytochrome c oxidase (complex IV, CIV), a multisubunit enzyme composed of 14 subunits. The complex is composed of a catalytic core of 3 subunits MT-CO1, MT-CO2 and MT-CO3, encoded in the mitochondrial DNA, and 11 supernumerary subunits COX4I, COX5A, COX5B, COX6A, COX6B, COX6C, COX7A, COX7B, COX7C, COX8 and NDUFA4, which are encoded in the nuclear genome. The complex exists as a monomer or a dimer and forms supercomplexes (SCs) in the inner mitochondrial membrane with NADH-ubiquinone oxidoreductase (complex I, CI) and ubiquinol-cytochrome c oxidoreductase (cytochrome b-c1 complex, complex III, CIII), resulting in different assemblies (supercomplex SCI(1)III(2)IV(1) and megacomplex MCI(2)III(2)IV(2)). Interacts with RAB5IF.

The protein localises to the mitochondrion inner membrane. The protein operates within energy metabolism; oxidative phosphorylation. In terms of biological role, component of the cytochrome c oxidase, the last enzyme in the mitochondrial electron transport chain which drives oxidative phosphorylation. The respiratory chain contains 3 multisubunit complexes succinate dehydrogenase (complex II, CII), ubiquinol-cytochrome c oxidoreductase (cytochrome b-c1 complex, complex III, CIII) and cytochrome c oxidase (complex IV, CIV), that cooperate to transfer electrons derived from NADH and succinate to molecular oxygen, creating an electrochemical gradient over the inner membrane that drives transmembrane transport and the ATP synthase. Cytochrome c oxidase is the component of the respiratory chain that catalyzes the reduction of oxygen to water. Electrons originating from reduced cytochrome c in the intermembrane space (IMS) are transferred via the dinuclear copper A center (CU(A)) of subunit 2 and heme A of subunit 1 to the active site in subunit 1, a binuclear center (BNC) formed by heme A3 and copper B (CU(B)). The BNC reduces molecular oxygen to 2 water molecules using 4 electrons from cytochrome c in the IMS and 4 protons from the mitochondrial matrix. The protein is Cytochrome c oxidase subunit 7C, mitochondrial (COX7C) of Sus scrofa (Pig).